The sequence spans 355 residues: Probable F-box protein At5g36000 (355 aa).

The segment covering 1–14 has biased composition (basic and acidic residues); sequence MNTRSGDAEGDIRG. The interval 1 to 44 is disordered; sequence MNTRSGDAEGDIRGKMIAPVRDGNGGQKRKLVQSNDIQRDEDGG. The F-box; degenerate domain occupies 78–124; the sequence is QSRFSWYEQDIWTYITRFLDGKSLVKLGATNKWFYKIAMEDTVWRFA.

In Arabidopsis thaliana (Mouse-ear cress), this protein is Probable F-box protein At5g36000.